A 428-amino-acid chain; its full sequence is Glutamate-1-semialdehyde 2,1-aminomutase (428 aa).

At K265 the chain carries N6-(pyridoxal phosphate)lysine.

Belongs to the class-III pyridoxal-phosphate-dependent aminotransferase family. HemL subfamily. As to quaternary structure, homodimer. Requires pyridoxal 5'-phosphate as cofactor.

Its subcellular location is the cytoplasm. The enzyme catalyses (S)-4-amino-5-oxopentanoate = 5-aminolevulinate. It functions in the pathway porphyrin-containing compound metabolism; protoporphyrin-IX biosynthesis; 5-aminolevulinate from L-glutamyl-tRNA(Glu): step 2/2. This is Glutamate-1-semialdehyde 2,1-aminomutase from Legionella pneumophila (strain Paris).